Reading from the N-terminus, the 186-residue chain is TATA box-binding protein-like 1 (186 aa).

The protein belongs to the TBP family.

It localises to the cytoplasm. The protein resides in the nucleus. Functionally, part of a specialized transcription system that mediates the transcription of most ribosomal proteins through the 5'-TCT-3' motif which is a core promoter element at these genes. Seems to also mediate the transcription of NF1. Does not bind the TATA box. Members of the TBP family are differentially required to regulate transcription and development during early embryogenesis. Particularly regulates genes that have a role in catabolism. The protein is TATA box-binding protein-like 1 (tbpl1) of Xenopus tropicalis (Western clawed frog).